Consider the following 435-residue polypeptide: Histidine--tRNA ligase (435 aa).

This sequence belongs to the class-II aminoacyl-tRNA synthetase family. As to quaternary structure, homodimer.

It localises to the cytoplasm. The catalysed reaction is tRNA(His) + L-histidine + ATP = L-histidyl-tRNA(His) + AMP + diphosphate + H(+). The sequence is that of Histidine--tRNA ligase from Synechococcus elongatus (strain ATCC 33912 / PCC 7942 / FACHB-805) (Anacystis nidulans R2).